We begin with the raw amino-acid sequence, 289 residues long: tRNA pseudouridine synthase B (289 aa).

Asp38 (nucleophile) is an active-site residue.

It belongs to the pseudouridine synthase TruB family. Type 1 subfamily.

The catalysed reaction is uridine(55) in tRNA = pseudouridine(55) in tRNA. Functionally, responsible for synthesis of pseudouridine from uracil-55 in the psi GC loop of transfer RNAs. The chain is tRNA pseudouridine synthase B from Acaryochloris marina (strain MBIC 11017).